We begin with the raw amino-acid sequence, 419 residues long: Sulfate adenylyltransferase (419 aa).

It belongs to the sulfate adenylyltransferase family.

The catalysed reaction is sulfate + ATP + H(+) = adenosine 5'-phosphosulfate + diphosphate. It participates in sulfur metabolism; hydrogen sulfide biosynthesis; sulfite from sulfate: step 1/3. The protein is Sulfate adenylyltransferase of Psychrobacter sp. (strain PRwf-1).